Consider the following 295-residue polypeptide: Small ribosomal subunit protein uS2 (295 aa).

The interval 242–295 (APVEPTLARELAPEAPAPEAPAEEAPAAEAAPAAEAAPAAEAAPAEASSEEQAG) is disordered. Low complexity predominate over residues 264-288 (EEAPAAEAAPAAEAAPAAEAAPAEA).

The protein belongs to the universal ribosomal protein uS2 family.

This is Small ribosomal subunit protein uS2 from Phenylobacterium zucineum (strain HLK1).